Reading from the N-terminus, the 591-residue chain is F420 non-reducing hydrogenase II large subunit (591 aa).

Residue E42 participates in Mg(2+) binding. Positions 61, 64, 569, and 572 each coordinate Ni(2+). C64 lines the Fe cation pocket. Fe cation is bound at residue C572. H575 is a binding site for Mg(2+).

Belongs to the [NiFe]/[NiFeSe] hydrogenase large subunit family. In terms of assembly, composed of a large subunit (VhtA), a small subunit (VhtG) and a cytochrome subunit (VhtC). Requires Ni(2+) as cofactor. The cofactor is Fe cation.

It is found in the cell membrane. It carries out the reaction methanophenazine + H2 = dihydromethanophenazine. Its function is as follows. Part of the F420 non-reducing hydrogenase II complex that catalyzes the reduction of methanophenazine to dihydromethanophenazine. The chain is F420 non-reducing hydrogenase II large subunit from Methanosarcina mazei (strain ATCC BAA-159 / DSM 3647 / Goe1 / Go1 / JCM 11833 / OCM 88) (Methanosarcina frisia).